The sequence spans 284 residues: Kynurenine formamidase avaC (284 aa).

Positions 47–51 (HGGGW) match the HGGXW motif. Catalysis depends on S130, which acts as the Nucleophile.

This sequence belongs to the kynurenine formamidase family.

It carries out the reaction N-formyl-L-kynurenine + H2O = L-kynurenine + formate + H(+). The protein operates within secondary metabolite metabolism. In terms of biological role, kynurenine formamidase; part of the cluster that mediates the biosynthesis of a highly modified cyclo-arginine-tryptophan dipeptide (cRW). Within the pathway, avaC catalyzes the deformylation of the cyclo-Arg-formylkynurenine iketopiperazine (DKP), produced by the FAD-dependent monooxygenase avaB. The first step of the pathway is perfornmed by the arginine-containing cyclodipeptide synthase (RCPDS) avaA that acts as the scaffold-generating enzyme and is responsible for formation of the cyclo-Arg-Trp (cRW) diketopiperazine. AvaB then acts as a multifunctional flavoenzyme that is responsible for generating the cyclo-Arg-formylkynurenine DKP, which can be deformylated by avaC. AvaB then further catalyzes an additional N-oxidation followed by cyclization and dehydration. The next step is an N-acetylation of the guanidine group catalyzed by the arginine N-acetyltransferase avaD. The roles of the additional enzymes identified within the ava cluster still have to be determined. The sequence is that of Kynurenine formamidase avaC from Aspergillus versicolor.